The chain runs to 387 residues: Putative gustatory receptor 22d (387 aa).

Residues 1-43 (MFRPRCGLRQKFVYVILKSILYSSWLLGIFPFKYEPKKRRLRR) lie on the Cytoplasmic side of the membrane. Residues 44-64 (SMWLILFGVVISSSLLILMVK) form a helical membrane-spanning segment. Over 65-82 (QSAEDREHGIMLDVFQRN) the chain is Extracellular. The helical transmembrane segment at 83–103 (ALLYQISSLMGVVGVVSICTV) threads the bilayer. Residues 104 to 142 (HLRTLWRSKHLEEIYNGLMLLEAKYFCSNAVECPAFDGY) lie on the Cytoplasmic side of the membrane. The chain crosses the membrane as a helical span at residues 143 to 163 (VIQKGVVIVVGLLAPWMVHFG). Over 164-184 (MPDSKLPVLNVLVVSMVKLGT) the chain is Extracellular. The chain crosses the membrane as a helical span at residues 185–205 (LLLALHYHLGVVIIYRFVWLI). Topologically, residues 206–252 (NRELLSLVCSLRGNHKGSSSRVRFLLKLYNKLVNLYSKLADCYDCQT) are cytoplasmic. Residues 253–273 (VLMMAIFLAANIIVCFYMIVY) form a helical membrane-spanning segment. Topologically, residues 274–281 (RISLSKMS) are extracellular. Residues 282–302 (FFVMLIMFPLAIANNFMDFWL) traverse the membrane as a helical segment. Topologically, residues 303–363 (SMKVCDLLQK…HCGLFHVNRE (61 aa)) are cytoplasmic. A helical transmembrane segment spans residues 364–384 (MGFKMFVASVLYLLYLVQFDY). At 385–387 (MNL) the chain is on the extracellular side.

The protein belongs to the insect chemoreceptor superfamily. Gustatory receptor (GR) family. Gr22e subfamily. As to expression, expressed in neurons of the dorsal pharyngeal sense organs of larvae.

It localises to the cell membrane. Probable gustatory receptor which mediates acceptance or avoidance behavior, depending on its substrates. This is Putative gustatory receptor 22d from Drosophila melanogaster (Fruit fly).